A 290-amino-acid polypeptide reads, in one-letter code: DegV domain-containing protein MG450 (290 aa).

The region spanning 3 to 289 (IAFLVDSVSN…INSYAFLIQT (287 aa)) is the DegV domain. Hexadecanoate is bound by residues threonine 65 and serine 97.

Functionally, may bind long-chain fatty acids, such as palmitate, and may play a role in lipid transport or fatty acid metabolism. In Mycoplasma genitalium (strain ATCC 33530 / DSM 19775 / NCTC 10195 / G37) (Mycoplasmoides genitalium), this protein is DegV domain-containing protein MG450.